We begin with the raw amino-acid sequence, 188 residues long: Deoxycytidylate deaminase (188 aa).

The region spanning 1–171 (MKASTVLQIA…DILRNAGIEV (171 aa)) is the CMP/dCMP-type deaminase domain. Residues cysteine 19, cysteine 49, histidine 94, glutamate 102, and histidine 104 each contribute to the Zn(2+) site. Catalysis depends on glutamate 106, which acts as the Proton donor. Residues cysteine 132 and cysteine 135 each contribute to the Zn(2+) site.

The protein belongs to the cytidine and deoxycytidylate deaminase family. As to quaternary structure, homohexamer. Zn(2+) serves as cofactor.

It carries out the reaction dCMP + H2O + H(+) = dUMP + NH4(+). With respect to regulation, allosteric enzyme whose activity is greatly influenced by the end products of its metabolic pathway, dCTP and dTTP. In terms of biological role, supplies the nucleotide substrate for thymidylate synthetase. In Enterobacteria phage T2 (Bacteriophage T2), this protein is Deoxycytidylate deaminase (CD).